The sequence spans 504 residues: Acetyltransferase pyiB (504 aa).

A signal peptide spans 1–18 (MGFLSAGGLWASLFRARI). Asn84 carries an N-linked (GlcNAc...) asparagine glycan. His181 serves as the catalytic Proton acceptor. 2 N-linked (GlcNAc...) asparagine glycosylation sites follow: Asn413 and Asn467.

The protein belongs to the plant acyltransferase family.

It functions in the pathway mycotoxin biosynthesis. Its function is as follows. Acetyltransferase; part of the gene cluster that mediates the biosynthesis of the mycotoxin pyrichalasin H, a tyrosine-derived cytochalasan that inhibits the growth of rice seedlings, but also inhibits lymphocyte capping and actin polymerization and alters cell morphology. Pyrichalasin H is indicated as the responsible agent for the genus-specific pathogenicity of M.grisea toward crabgrass. The first step in the pathway is catalyzed by the O-methyltransferase pyiA which methylates free tyrosine to generate the precursor O-methyltyrosine. The hybrid PKS-NRPS pyiS, assisted by the enoyl reductase pyiC, are responsible for fusion of the O-methyltyrosine precursor and the polyketide backbone. The polyketide synthase module (PKS) of pyiS is responsible for the synthesis of the polyketide backbone and the downstream nonribosomal peptide synthetase (NRPS) amidates the carboxyl end of the polyketide with the O-methyltyrosine precursor. As the NRPS A-domain demonstrates substrate tolerance, pyiS can also use phenylalanine, tyrosine and even para-chlorophenylalanine as amino acid precursor, which leads to the production of novel cytochalasans, including halogenated cytochalasans. Because pyiS lacks a designated enoylreductase (ER) domain, the required activity is provided the enoyl reductase pyiC. Reduction by the hydrolyase pyiE leads to 1,5-dihydropyrrolone, which is substrate for dehydration and intra-molecular Diels-Alder cyclization by the Diels-Alderase pyiF to yield the required isoindolone-fused macrocycle. The tailoring cytochrome P450 monooxygenases piyD and piyG catalyze the hydroxylation at C-18 and C-7, respectivily, whereas the short-chain dehydrogenase/reductase pyiH reduces the carbonyl at C-21 in preparation for the transfer of an acetyl group by the acetyltransferase pyiB. These 3 reactions whose order is not clear yet, lead to the production of O-methylpyrichalasin J, a deacetylated pyrichalasin H. Finally, pyiB to converts O-methylpyrichalasin J into the final product pyrichalasin H via acetylation of C-21. This is Acetyltransferase pyiB from Pyricularia grisea (Crabgrass-specific blast fungus).